The following is a 108-amino-acid chain: ATP-dependent Clp protease adapter protein ClpS (108 aa).

It belongs to the ClpS family. In terms of assembly, binds to the N-terminal domain of the chaperone ClpA.

Involved in the modulation of the specificity of the ClpAP-mediated ATP-dependent protein degradation. This Cupriavidus necator (strain ATCC 17699 / DSM 428 / KCTC 22496 / NCIMB 10442 / H16 / Stanier 337) (Ralstonia eutropha) protein is ATP-dependent Clp protease adapter protein ClpS.